Reading from the N-terminus, the 100-residue chain is Urease subunit gamma (100 aa).

This sequence belongs to the urease gamma subunit family. As to quaternary structure, heterotrimer of UreA (gamma), UreB (beta) and UreC (alpha) subunits. Three heterotrimers associate to form the active enzyme.

It is found in the cytoplasm. The catalysed reaction is urea + 2 H2O + H(+) = hydrogencarbonate + 2 NH4(+). Its pathway is nitrogen metabolism; urea degradation; CO(2) and NH(3) from urea (urease route): step 1/1. The sequence is that of Urease subunit gamma from Limosilactobacillus fermentum (Lactobacillus fermentum).